We begin with the raw amino-acid sequence, 576 residues long: Potassium-transporting ATPase potassium-binding subunit (576 aa).

12 helical membrane-spanning segments follow: residues 4–24 (QAWI…WPLG), 65–85 (AYAL…YALQ), 136–156 (ALGV…FALI), 179–199 (VYVL…QGVI), 257–277 (LSNF…VFAF), 288–308 (GALL…VTSL), 341–361 (FGIA…CGAV), 371–391 (LGGA…GGVG), 393–413 (GLYG…LMIG), 430–450 (MTAV…AVAL), 497–517 (LLLA…VLAI), and 540–560 (LFVV…YVPA).

The protein belongs to the KdpA family. As to quaternary structure, the system is composed of three essential subunits: KdpA, KdpB and KdpC.

Its subcellular location is the cell inner membrane. Part of the high-affinity ATP-driven potassium transport (or Kdp) system, which catalyzes the hydrolysis of ATP coupled with the electrogenic transport of potassium into the cytoplasm. This subunit binds the periplasmic potassium ions and delivers the ions to the membrane domain of KdpB through an intramembrane tunnel. The protein is Potassium-transporting ATPase potassium-binding subunit of Methylibium petroleiphilum (strain ATCC BAA-1232 / LMG 22953 / PM1).